The primary structure comprises 208 residues: CASP-like protein 2U9 (208 aa).

Residues 1 to 27 (MGVADAPSPGNVPVLGDMKNRSAAEMK) are Cytoplasmic-facing. The chain crosses the membrane as a helical span at residues 28–48 (ISVLALRALTLVLLVIALALM). Over 49 to 87 (VSNKQTQSIPIKLPGMASTIFLKKTATFSQITGVQYYVG) the chain is Extracellular. The chain crosses the membrane as a helical span at residues 88–108 (ALSVAVAYMFFQMLAGLFTIL). Residues 109–120 (TTGSIVGSKSRA) lie on the Cytoplasmic side of the membrane. The helical transmembrane segment at 121 to 141 (WVTFILDQLIAYLMVSAATVV) threads the bilayer. The Extracellular portion of the chain corresponds to 142–168 (AEVGYIARRGETKVGWNQVCSDFKHYC). A helical membrane pass occupies residues 169–189 (FIYGFSLVNAFLATIAFLPVV). At 190–208 (AVSAFHLFRMYGAQSAQSK) the chain is on the cytoplasmic side.

The protein belongs to the Casparian strip membrane proteins (CASP) family. As to quaternary structure, homodimer and heterodimers.

It is found in the cell membrane. This chain is CASP-like protein 2U9, found in Selaginella moellendorffii (Spikemoss).